The primary structure comprises 1044 residues: Sarcoplasmic/endoplasmic reticulum calcium ATPase 2 (1044 aa).

The Cytoplasmic segment spans residues 1–48; it reads MENAHTKTVEEVLGHFGVNESTGLSLEQVKKLKERWGSNELPAEEGKT. S38 is subject to Phosphoserine. A helical membrane pass occupies residues 49–69; it reads LLELVIEQFEDLLVRILLLAA. At 70 to 89 the chain is on the lumenal side; the sequence is CISFVLAWFEEGEETITAFV. Residues 90 to 110 form a helical membrane-spanning segment; that stretch reads EPFVILLILVANAIVGVWQER. Residues 111-253 are Cytoplasmic-facing; it reads NAENAIEALK…QERTPLQQKL (143 aa). The helical transmembrane segment at 254-273 threads the bilayer; it reads DEFGEQLSKVISLICIAVWI. Topologically, residues 274–295 are lumenal; it reads INIGHFNDPVHGGSWIRGAIYY. A 3'-nitrotyrosine mark is found at Y294 and Y295. Residues 296 to 313 traverse the membrane as a helical segment; sequence FKIAVALAVAAIPEGLPA. Ca(2+) contacts are provided by V304, A305, I307, and E309. Over 314-756 the chain is Cytoplasmic; it reads VITTCLALGT…EEGRAIYNNM (443 aa). The active-site 4-aspartylphosphate intermediate is the D351. Positions 351 and 353 each coordinate Mg(2+). Position 353 (T353) interacts with ATP. A Phosphothreonine modification is found at T441. ATP is bound by residues E442, R489, and K514. S531 carries the phosphoserine modification. R559 provides a ligand contact to ATP. Residues 575–594 form an interaction with HAX1 region; the sequence is MHLEDSANFIKYETNLTFVG. S580 is modified (phosphoserine). Residues T624, G625, and D626 each contribute to the ATP site. Phosphoserine occurs at positions 661 and 663. ATP is bound by residues R677 and K683. D702 contributes to the Mg(2+) binding site. N705 provides a ligand contact to ATP. Residues 757-776 traverse the membrane as a helical segment; sequence KQFIRYLISSNVGEVVCIFL. Residues N767 and E770 each coordinate Ca(2+). Topologically, residues 777–786 are lumenal; it reads TAALGFPEAL. The helical transmembrane segment at 787–807 threads the bilayer; sequence IPVQLLWVNLVTDGLPATALG. Residues 787 to 807 form an interaction with PLN region; the sequence is IPVQLLWVNLVTDGLPATALG. Positions 788-1044 are interaction with TMEM64 and PDIA3; it reads PVQLLWVNLV…DTNFSDMFWS (257 aa). 3 residues coordinate Ca(2+): N795, T798, and D799. Topologically, residues 808-827 are cytoplasmic; sequence FNPPDLDIMNKPPRNPKEPL. The helical transmembrane segment at 828–850 threads the bilayer; that stretch reads ISGWLFFRYLAIGCYVGAATVGA. The Lumenal segment spans residues 851–896; that stretch reads AAWWFIAADGGPRVSFYQLSHFLQCKEDNPDFDGVDCAIFESPYPM. Residues C875 and C887 are joined by a disulfide bond. A helical transmembrane segment spans residues 897 to 916; it reads TMALSVLVTIEMCNALNSLS. Residue E907 participates in Ca(2+) binding. Residues 917-929 lie on the Cytoplasmic side of the membrane; sequence ENQSLLRMPPWEN. Residues 930–948 traverse the membrane as a helical segment; sequence IWLVGSICLSMSLHFLILY. An interaction with PLN region spans residues 931-942; that stretch reads WLVGSICLSMSL. Topologically, residues 949–963 are lumenal; it reads VEPLPLIFQITPLNL. Residues 964 to 984 traverse the membrane as a helical segment; it reads TQWLMVLKISLPVILMDETLK. At 985–1044 the chain is on the cytoplasmic side; sequence FVARNYLEQPGKECVQPATKSSCSLSACTDGISWPFVLLIMPLVVWVYSTDTNFSDMFWS.

This sequence belongs to the cation transport ATPase (P-type) (TC 3.A.3) family. Type IIA subfamily. Interacts with sarcolipin (SLN); the interaction inhibits ATP2A2 Ca(2+) affinity. Interacts with phospholamban (PLN); the interaction inhibits ATP2A2 Ca(2+) affinity. Interacts with myoregulin (MRLN). Interacts with ARLN and ERLN; the interactions inhibit ATP2A2 Ca(2+) affinity. Interacts with STRIT1/DWORF; the interaction results in activation of ATP2A2. Interacts with the monomeric forms of SLN, PLN, ARLN, ERLN and STRI1/DWORF. Interacts with HAX1. Interacts with S100A8 and S100A9. Interacts with SLC35G1 and STIM1. Interacts with TMEM203. Interacts with TMEM64 and PDIA3. Interacts with TMX1. Interacts with TMX2. Interacts with VMP1; VMP1 competes with PLN and SLN to prevent them from forming an inhibitory complex with ATP2A2. Interacts with ULK1. Interacts with S100A1 in a Ca(2+)-dependent manner. Interacts with TUNAR. Interacts with FLVCR2; this interaction occurs in the absence of heme and promotes ATP2A2 proteasomal degradation; this complex is dissociated upon heme binding. Interacts with FNIP1. As to quaternary structure, interacts with TRAM2 (via C-terminus). It depends on Mg(2+) as a cofactor. Post-translationally, nitrated under oxidative stress. Nitration on the two tyrosine residues inhibits catalytic activity. In terms of processing, serotonylated on Gln residues by TGM2 in response to hypoxia, leading to its inactivation. As to expression, isoform 2 is highly expressed in heart and slow twitch skeletal muscle. Isoform 2 is widely expressed.

Its subcellular location is the endoplasmic reticulum membrane. It localises to the sarcoplasmic reticulum membrane. The catalysed reaction is Ca(2+)(in) + ATP + H2O = Ca(2+)(out) + ADP + phosphate + H(+). Its activity is regulated as follows. Has different conformational states with differential Ca2+ affinity. The E1 conformational state (active form) shows high Ca(2+) affinity, while the E2 state exhibits low Ca(2+) affinity. Binding of ATP allosterically increases its affinity for subsequent binding of Ca2+. Reversibly inhibited by phospholamban (PLN) at low calcium concentrations. PLN inhibits ATP2A2 Ca(2+) affinity by disrupting its allosteric activation by ATP. Inhibited by sarcolipin (SLN) and myoregulin (MRLN). The inhibition is blocked by VMP1. Enhanced by STRIT1/DWORF; STRIT1 increases activity by displacing sarcolipin (SLN), phospholamban (PLN) and myoregulin (MRLN). Stabilizes SERCA2 in its E2 state. Functionally, this magnesium-dependent enzyme catalyzes the hydrolysis of ATP coupled with the translocation of calcium from the cytosol to the sarcoplasmic reticulum lumen. Involved in autophagy in response to starvation. Upon interaction with VMP1 and activation, controls ER-isolation membrane contacts for autophagosome formation. Also modulates ER contacts with lipid droplets, mitochondria and endosomes. In coordination with FLVCR2 mediates heme-stimulated switching from mitochondrial ATP synthesis to thermogenesis. Involved in the regulation of the contraction/relaxation cycle. Acts as a regulator of TNFSF11-mediated Ca(2+) signaling pathways via its interaction with TMEM64 which is critical for the TNFSF11-induced CREB1 activation and mitochondrial ROS generation necessary for proper osteoclast generation. Association between TMEM64 and SERCA2 in the ER leads to cytosolic Ca(2+) spiking for activation of NFATC1 and production of mitochondrial ROS, thereby triggering Ca(2+) signaling cascades that promote osteoclast differentiation and activation. The protein is Sarcoplasmic/endoplasmic reticulum calcium ATPase 2 of Mus musculus (Mouse).